The primary structure comprises 128 residues: Secreted RxLR effector protein RXLR-C09 (128 aa).

The first 22 residues, 1–22 (MRFCLVFIRLAAFVILSGGATS), serve as a signal peptide directing secretion. The short motif at 58–75 (RLLRLNDQADISGHDEER) is the RxLR-dEER element.

The protein belongs to the RxLR effector family.

The protein resides in the secreted. Its subcellular location is the host cell membrane. It localises to the host nucleus. Its function is as follows. Secreted effector that suppresses pattern-triggered immunity (PTI) in plant host. The protein is Secreted RxLR effector protein RXLR-C09 of Plasmopara halstedii (Downy mildew of sunflower).